We begin with the raw amino-acid sequence, 39 residues long: Omega-theraphotoxin-Asp1g (39 aa).

Disulfide bonds link Cys-4/Cys-25, Cys-8/Cys-31, and Cys-17/Cys-36.

The protein belongs to the neurotoxin 12 (Hwtx-2) family. 06 (TXP1) subfamily. In terms of tissue distribution, expressed by the venom gland.

It localises to the secreted. Functionally, inhibits voltage-gated calcium channels (Cav) in rat cerebellar granule cells. Has insecticidal activity. The chain is Omega-theraphotoxin-Asp1g from Aphonopelma sp. (American tarantula).